Reading from the N-terminus, the 301-residue chain is tRNA dimethylallyltransferase (301 aa).

9 to 16 (GPTASGKS) provides a ligand contact to ATP. 11–16 (TASGKS) provides a ligand contact to substrate. An interaction with substrate tRNA region spans residues 34–37 (DSMQ).

The protein belongs to the IPP transferase family. As to quaternary structure, monomer. Requires Mg(2+) as cofactor.

It catalyses the reaction adenosine(37) in tRNA + dimethylallyl diphosphate = N(6)-dimethylallyladenosine(37) in tRNA + diphosphate. In terms of biological role, catalyzes the transfer of a dimethylallyl group onto the adenine at position 37 in tRNAs that read codons beginning with uridine, leading to the formation of N6-(dimethylallyl)adenosine (i(6)A). The protein is tRNA dimethylallyltransferase of Corynebacterium glutamicum (strain R).